The chain runs to 137 residues: 3-hydroxyacyl-[acyl-carrier-protein] dehydratase FabZ (137 aa).

Histidine 46 is a catalytic residue.

The protein belongs to the thioester dehydratase family. FabZ subfamily.

The protein localises to the cytoplasm. It catalyses the reaction a (3R)-hydroxyacyl-[ACP] = a (2E)-enoyl-[ACP] + H2O. Functionally, involved in unsaturated fatty acids biosynthesis. Catalyzes the dehydration of short chain beta-hydroxyacyl-ACPs and long chain saturated and unsaturated beta-hydroxyacyl-ACPs. The sequence is that of 3-hydroxyacyl-[acyl-carrier-protein] dehydratase FabZ from Thermotoga neapolitana (strain ATCC 49049 / DSM 4359 / NBRC 107923 / NS-E).